A 360-amino-acid polypeptide reads, in one-letter code: Chorismate synthase (360 aa).

R48 and R54 together coordinate NADP(+). FMN contacts are provided by residues 125–127 (RSS), 246–247 (NA), G286, 301–305 (KPTSS), and R327.

It belongs to the chorismate synthase family. In terms of assembly, homotetramer. FMNH2 is required as a cofactor.

It carries out the reaction 5-O-(1-carboxyvinyl)-3-phosphoshikimate = chorismate + phosphate. Its pathway is metabolic intermediate biosynthesis; chorismate biosynthesis; chorismate from D-erythrose 4-phosphate and phosphoenolpyruvate: step 7/7. Its function is as follows. Catalyzes the anti-1,4-elimination of the C-3 phosphate and the C-6 proR hydrogen from 5-enolpyruvylshikimate-3-phosphate (EPSP) to yield chorismate, which is the branch point compound that serves as the starting substrate for the three terminal pathways of aromatic amino acid biosynthesis. This reaction introduces a second double bond into the aromatic ring system. The chain is Chorismate synthase from Actinobacillus succinogenes (strain ATCC 55618 / DSM 22257 / CCUG 43843 / 130Z).